Here is a 271-residue protein sequence, read N- to C-terminus: Thermoregulatory protein LcrF (271 aa).

The region spanning 167-265 (ERLQKFMEEN…GCTPSQARLT (99 aa)) is the HTH araC/xylS-type domain. 2 DNA-binding regions (H-T-H motif) span residues 184–205 (SKFA…GTVY) and 232–255 (IVDI…RRRF).

In terms of biological role, transcriptional activator of the thermally regulated virulent yopE gene. LcrF activity could be modulated by the interaction with an inducer molecule serving as a temperature messenger. The availability of the messenger would in turn be controlled by a temperature-responsive process serving as a cellular thermometer. The sequence is that of Thermoregulatory protein LcrF (lcrF) from Yersinia pestis.